Reading from the N-terminus, the 147-residue chain is Bis(5'-nucleosyl)-tetraphosphatase [asymmetrical] (147 aa).

The 139-residue stretch at 1–139 (MALRACGLII…EMKAALQEGH (139 aa)) folds into the Nudix hydrolase domain. At alanine 2 the chain carries N-acetylalanine. Positions 43–64 (GHVEPGEDDLETALRETQEEAG) match the Nudix box motif.

The protein belongs to the Nudix hydrolase family. A divalent metal cation is required as a cofactor.

It carries out the reaction P(1),P(4)-bis(5'-guanosyl) tetraphosphate + H2O = GMP + GTP + 2 H(+). The catalysed reaction is a 5'-end CoA-ribonucleoside in mRNA + H2O = a 5'-end phospho-adenosine-phospho-ribonucleoside in mRNA + (R)-4'-phosphopantetheine + 2 H(+). It catalyses the reaction a 5'-end FAD-phospho-ribonucleoside in mRNA + H2O = a 5'-end phospho-adenosine-phospho-ribonucleoside in mRNA + FMN + 2 H(+). Catalyzes the asymmetric hydrolysis of diadenosine 5',5'''-P1,P4-tetraphosphate (Ap4A) to yield AMP and ATP. Exhibits decapping activity towards FAD-capped RNAs and dpCoA-capped RNAs in vitro. This Homo sapiens (Human) protein is Bis(5'-nucleosyl)-tetraphosphatase [asymmetrical] (NUDT2).